We begin with the raw amino-acid sequence, 147 residues long: Large ribosomal subunit protein uL15 (147 aa).

The tract at residues 1-42 is disordered; it reads MTIKLHHLRPAPGAKTDKTRVGRGEGSKGKTAGRGTKGTKAR. Positions 15-28 are enriched in basic and acidic residues; the sequence is KTDKTRVGRGEGSK.

This sequence belongs to the universal ribosomal protein uL15 family. In terms of assembly, part of the 50S ribosomal subunit.

Its function is as follows. Binds to the 23S rRNA. This is Large ribosomal subunit protein uL15 from Nocardia farcinica (strain IFM 10152).